The following is a 505-amino-acid chain: RNA-splicing ligase RtcB homolog (505 aa).

The Mn(2+) site is built by D119, C122, H227, and H259. GMP is bound at residue 226–230 (NHYAE). S300 is modified (phosphoserine). H353 serves as a coordination point for Mn(2+). Residues 353–354 (HN), 402–405 (GGTM), S409, and 428–431 (HGAG) each bind GMP. H428 acts as the GMP-histidine intermediate in catalysis. Residue K496 forms a Glycyl lysine isopeptide (Lys-Gly) (interchain with G-Cter in SUMO2) linkage. K504 is a binding site for GMP.

It belongs to the RtcB family. In terms of assembly, catalytic component of the tRNA-splicing ligase complex. Mn(2+) is required as a cofactor.

The protein localises to the nucleus. It localises to the cytoplasm. The enzyme catalyses a 3'-end 3'-phospho-ribonucleotide-RNA + a 5'-end dephospho-ribonucleoside-RNA + GTP = a ribonucleotidyl-ribonucleotide-RNA + GMP + diphosphate. The catalysed reaction is a 3'-end 2',3'-cyclophospho-ribonucleotide-RNA + a 5'-end dephospho-ribonucleoside-RNA + GTP + H2O = a ribonucleotidyl-ribonucleotide-RNA + GMP + diphosphate + H(+). Catalytic subunit of the tRNA-splicing ligase complex that acts by directly joining spliced tRNA halves to mature-sized tRNAs by incorporating the precursor-derived splice junction phosphate into the mature tRNA as a canonical 3',5'-phosphodiester. May act as an RNA ligase with broad substrate specificity, and may function toward other RNAs. This is RNA-splicing ligase RtcB homolog from Rattus norvegicus (Rat).